The sequence spans 103 residues: Putative sulfurtransferase YtwF (103 aa).

The region spanning 17-100 (ADEELYLIDV…GMMAWEGETK (84 aa)) is the Rhodanese domain. The Cysteine persulfide intermediate role is filled by C65.

This chain is Putative sulfurtransferase YtwF (ytwF), found in Bacillus subtilis (strain 168).